A 485-amino-acid polypeptide reads, in one-letter code: Zinc finger protein 577 (485 aa).

The tract at residues 1 to 21 (MKNATIVMSVRREQGSSSGEG) is disordered. A KRAB domain is found at 23–94 (LSFEDVAVGF…EGAAHSQICP (72 aa)). The C2H2-type 1; degenerate zinc finger occupies 158–180 (HECSVCGRAFSRKAQLIQHQRTE). C2H2-type zinc fingers lie at residues 186 to 208 (HGCG…QRTH), 214 to 236 (HECS…QRTH), 242 to 264 (YRCS…QRSH), 270 to 292 (YGCS…QRLH), 298 to 320 (YKCS…QRIH), 326 to 348 (YECS…QRTH), and 354 to 376 (YSCR…EKTH).

Belongs to the krueppel C2H2-type zinc-finger protein family.

The protein resides in the nucleus. In terms of biological role, may be involved in transcriptional regulation. In Homo sapiens (Human), this protein is Zinc finger protein 577 (ZNF577).